A 410-amino-acid chain; its full sequence is Elongation factor Tu, apicoplast (410 aa).

One can recognise a tr-type G domain in the interval 10–214 (KQHINLGTIG…QIIDNIIIPT (205 aa)). Positions 19–26 (GHVDHGKT) are G1. Residue 19-26 (GHVDHGKT) coordinates GTP. Thr26 lines the Mg(2+) pocket. Positions 60–64 (GITIN) are G2. A G3 region spans residues 81–84 (DCPG). GTP is bound by residues 81 to 85 (DCPGH) and 136 to 139 (NKED). The segment at 136–139 (NKED) is G4. The tract at residues 174–176 (SAL) is G5.

Belongs to the TRAFAC class translation factor GTPase superfamily. Classic translation factor GTPase family. EF-Tu/EF-1A subfamily.

The protein localises to the plastid. Its subcellular location is the apicoplast. The enzyme catalyses GTP + H2O = GDP + phosphate + H(+). Its function is as follows. GTP hydrolase that promotes the GTP-dependent binding of aminoacyl-tRNA to the A-site of ribosomes during protein biosynthesis. The chain is Elongation factor Tu, apicoplast (tufA) from Plasmodium falciparum (isolate 3D7).